A 728-amino-acid polypeptide reads, in one-letter code: Phosphoribosylformylglycinamidine synthase subunit PurL (728 aa).

The active site involves histidine 42. The ATP site is built by tyrosine 45 and lysine 84. A Mg(2+)-binding site is contributed by glutamate 86. Residues serine 87–histidine 90 and arginine 109 contribute to the substrate site. Histidine 88 acts as the Proton acceptor in catalysis. Residue aspartate 110 participates in Mg(2+) binding. Glutamine 237 contributes to the substrate binding site. A Mg(2+)-binding site is contributed by aspartate 265. Glutamate 309–glutamine 311 provides a ligand contact to substrate. ATP contacts are provided by aspartate 491 and glycine 528. Asparagine 529 contributes to the Mg(2+) binding site. Serine 531 provides a ligand contact to substrate.

The protein belongs to the FGAMS family. Monomer. Part of the FGAM synthase complex composed of 1 PurL, 1 PurQ and 2 PurS subunits.

The protein resides in the cytoplasm. The enzyme catalyses N(2)-formyl-N(1)-(5-phospho-beta-D-ribosyl)glycinamide + L-glutamine + ATP + H2O = 2-formamido-N(1)-(5-O-phospho-beta-D-ribosyl)acetamidine + L-glutamate + ADP + phosphate + H(+). Its pathway is purine metabolism; IMP biosynthesis via de novo pathway; 5-amino-1-(5-phospho-D-ribosyl)imidazole from N(2)-formyl-N(1)-(5-phospho-D-ribosyl)glycinamide: step 1/2. Functionally, part of the phosphoribosylformylglycinamidine synthase complex involved in the purines biosynthetic pathway. Catalyzes the ATP-dependent conversion of formylglycinamide ribonucleotide (FGAR) and glutamine to yield formylglycinamidine ribonucleotide (FGAM) and glutamate. The FGAM synthase complex is composed of three subunits. PurQ produces an ammonia molecule by converting glutamine to glutamate. PurL transfers the ammonia molecule to FGAR to form FGAM in an ATP-dependent manner. PurS interacts with PurQ and PurL and is thought to assist in the transfer of the ammonia molecule from PurQ to PurL. The sequence is that of Phosphoribosylformylglycinamidine synthase subunit PurL from Campylobacter jejuni subsp. jejuni serotype O:2 (strain ATCC 700819 / NCTC 11168).